Here is a 118-residue protein sequence, read N- to C-terminus: MPRVKGGTVTRARRKKTIKLAKGYFGSKHTLYKVAKQQVMKSGQYAFRDRRQRKRDFRKLWITRINAAARQHDISYSRLMNGLKKAEIDINRKMLSEIAISDDKAFAELVSKAKEALK.

Belongs to the bacterial ribosomal protein bL20 family.

Binds directly to 23S ribosomal RNA and is necessary for the in vitro assembly process of the 50S ribosomal subunit. It is not involved in the protein synthesizing functions of that subunit. This Staphylococcus epidermidis (strain ATCC 35984 / DSM 28319 / BCRC 17069 / CCUG 31568 / BM 3577 / RP62A) protein is Large ribosomal subunit protein bL20.